We begin with the raw amino-acid sequence, 330 residues long: Inositol 2-dehydrogenase (330 aa).

The protein belongs to the Gfo/Idh/MocA family.

The catalysed reaction is myo-inositol + NAD(+) = scyllo-inosose + NADH + H(+). It participates in polyol metabolism; myo-inositol degradation into acetyl-CoA; acetyl-CoA from myo-inositol: step 1/7. Involved in the oxidation of myo-inositol (MI) to 2-keto-myo-inositol (2KMI or 2-inosose). The protein is Inositol 2-dehydrogenase (idhA) of Rhizobium meliloti (strain 1021) (Ensifer meliloti).